Reading from the N-terminus, the 344-residue chain is Ubiquitin-associated domain-containing protein 2 (344 aa).

The signal sequence occupies residues 1–35 (MFTSTGSSGLYKAPLSKSLLLVPSALSLLLALLLP). Topologically, residues 36–91 (HCQKLFVYDLHAVKNDFQIWRLICGRIICLDLKDTFCSSLLIYNFRIFERRYGSRK) are extracellular. A helical transmembrane segment spans residues 92–112 (FASFLLGSWVLSALFDFLLIE). The Cytoplasmic segment spans residues 113–125 (AMQYFFGITAASN). The helical transmembrane segment at 126–146 (LPSGFLAPVFALFVPFYCSIP) threads the bilayer. Residues 147-163 (RVQVAQILGPLSITNKT) lie on the Extracellular side of the membrane. An N-linked (GlcNAc...) asparagine glycan is attached at asparagine 161. The helical transmembrane segment at 164–184 (LIYILGLQLFTSGSYIWIVAI) threads the bilayer. At 185 to 344 (SGLMSGLCYD…NVATNFLLQH (160 aa)) the chain is on the cytoplasmic side. The UBA domain occupies 304-344 (EVSEEQVARLMEMGFSRGDALEALRASNNDLNVATNFLLQH).

As to quaternary structure, interacts with FAF2. Interacts with LMBR1L. Interacts with AMFR and VCP.

Its subcellular location is the endoplasmic reticulum membrane. Restricts trafficking of FAF2 from the endoplasmic reticulum to lipid droplets. In association with LMBR1L and E3 ubiquitin-protein ligase AMFR, negatively regulates the canonical Wnt signaling pathway in the lymphocytes by promoting the ubiquitin-mediated degradation of CTNNB1 and Wnt receptors FZD6 and LRP6. This chain is Ubiquitin-associated domain-containing protein 2 (UBAC2), found in Homo sapiens (Human).